The primary structure comprises 197 residues: 3-isopropylmalate dehydratase small subunit (197 aa).

The protein belongs to the LeuD family. LeuD type 1 subfamily. As to quaternary structure, heterodimer of LeuC and LeuD.

It catalyses the reaction (2R,3S)-3-isopropylmalate = (2S)-2-isopropylmalate. Its pathway is amino-acid biosynthesis; L-leucine biosynthesis; L-leucine from 3-methyl-2-oxobutanoate: step 2/4. Functionally, catalyzes the isomerization between 2-isopropylmalate and 3-isopropylmalate, via the formation of 2-isopropylmaleate. This chain is 3-isopropylmalate dehydratase small subunit, found in Geobacillus sp. (strain WCH70).